The chain runs to 125 residues: Small ribosomal subunit protein uS13 (125 aa).

The tract at residues 92-125 (RRSLPARGQNTQTNARTRKGRRKTVAGKKKAVKK) is disordered. Positions 107-125 (RTRKGRRKTVAGKKKAVKK) are enriched in basic residues.

This sequence belongs to the universal ribosomal protein uS13 family. Part of the 30S ribosomal subunit. Forms a loose heterodimer with protein S19. Forms two bridges to the 50S subunit in the 70S ribosome.

Located at the top of the head of the 30S subunit, it contacts several helices of the 16S rRNA. In the 70S ribosome it contacts the 23S rRNA (bridge B1a) and protein L5 of the 50S subunit (bridge B1b), connecting the 2 subunits; these bridges are implicated in subunit movement. Contacts the tRNAs in the A and P-sites. The sequence is that of Small ribosomal subunit protein uS13 from Chlorobium phaeobacteroides (strain BS1).